Consider the following 176-residue polypeptide: MTVWLLIGFLLPVAIFAAPPINRLALFPDKSAWCEAKNITQIVGHSGCESKSIQNRACLGQCFSYSVPNTFPQSTESLVHCDSCMPIDSVWDVVTLECPGNEEFPRVDKLVEKILQCSCQACGKELSQEGAMFNVYLNTAEETLSPAETLGHHHHRPPAREEDSPAQSQREGESEE.

A signal peptide spans 1-17 (MTVWLLIGFLLPVAIFA). 5 disulfide bridges follow: C34–C84, C48–C98, C58–C117, C62–C119, and C81–C122. The 90-residue stretch at 34–123 (CEAKNITQIV…ILQCSCQACG (90 aa)) folds into the CTCK domain. The segment at 148–176 (ETLGHHHHRPPAREEDSPAQSQREGESEE) is disordered.

It belongs to the DAN family. In terms of assembly, interacts with bmp2; the interaction is blocked in presence of nog.

It localises to the secreted. Its function is as follows. May act as a tumor suppressor. Cytokine that has an axial patterning activity. Acts like bone morpho-genetic protein (BMP) antagonist in embryonic explants. Blocks the bmp2 activity. This Xenopus tropicalis (Western clawed frog) protein is Neuroblastoma suppressor of tumorigenicity 1 (nbl1).